We begin with the raw amino-acid sequence, 175 residues long: uncharacterized protein (175 aa).

A coiled-coil region spans residues 107–138 (KTEEEAEKTLQEIERKIFKKLWENLDKERKRE).

This is an uncharacterized protein from Aquifex aeolicus (strain VF5).